A 65-amino-acid polypeptide reads, in one-letter code: Hirudin-3A (65 aa).

The interval 1-3 (VVY) is interaction with thrombin active site. Disulfide bonds link Cys6–Cys14, Cys16–Cys28, and Cys22–Cys39. The tract at residues 39 to 65 (CVTGEGTPKPQSHNDGDFEEIPEEYLQ) is disordered. Residue Thr45 is glycosylated (O-linked (GalNAc...) threonine). Positions 55–65 (DFEEIPEEYLQ) are interaction with fibrinogen-binding exosite of thrombin. The span at 55–65 (DFEEIPEEYLQ) shows a compositional bias: acidic residues. Tyr63 carries the post-translational modification Sulfotyrosine.

This sequence belongs to the protease inhibitor I14 (hirudin) family.

It is found in the secreted. Its function is as follows. Hirudin is a potent thrombin-specific protease inhibitor. It forms a stable non-covalent complex with alpha-thrombin, thereby abolishing its ability to cleave fibrinogen. In Hirudo medicinalis (Medicinal leech), this protein is Hirudin-3A.